The following is a 159-amino-acid chain: Protein Smg homolog (159 aa).

It belongs to the Smg family.

This Vibrio campbellii (strain ATCC BAA-1116) protein is Protein Smg homolog.